Consider the following 240-residue polypeptide: Ubiquinone biosynthesis O-methyltransferase (240 aa).

Positions 44, 64, 85, and 129 each coordinate S-adenosyl-L-methionine.

The protein belongs to the methyltransferase superfamily. UbiG/COQ3 family.

The enzyme catalyses a 3-demethylubiquinol + S-adenosyl-L-methionine = a ubiquinol + S-adenosyl-L-homocysteine + H(+). It catalyses the reaction a 3-(all-trans-polyprenyl)benzene-1,2-diol + S-adenosyl-L-methionine = a 2-methoxy-6-(all-trans-polyprenyl)phenol + S-adenosyl-L-homocysteine + H(+). The protein operates within cofactor biosynthesis; ubiquinone biosynthesis. O-methyltransferase that catalyzes the 2 O-methylation steps in the ubiquinone biosynthetic pathway. The protein is Ubiquinone biosynthesis O-methyltransferase of Escherichia coli O6:K15:H31 (strain 536 / UPEC).